The primary structure comprises 372 residues: Queuine tRNA-ribosyltransferase (372 aa).

Residue aspartate 92 is the Proton acceptor of the active site. Residues 92–96 (DSGGY), aspartate 146, glutamine 188, and glycine 215 each bind substrate. The interval 246 to 252 (GIGSLRE) is RNA binding. Aspartate 265 functions as the Nucleophile in the catalytic mechanism. The RNA binding; important for wobble base 34 recognition stretch occupies residues 270-274 (TRLGR). Zn(2+)-binding residues include cysteine 303, cysteine 305, cysteine 308, and histidine 334.

This sequence belongs to the queuine tRNA-ribosyltransferase family. Homodimer. Within each dimer, one monomer is responsible for RNA recognition and catalysis, while the other monomer binds to the replacement base PreQ1. Requires Zn(2+) as cofactor.

The catalysed reaction is 7-aminomethyl-7-carbaguanine + guanosine(34) in tRNA = 7-aminomethyl-7-carbaguanosine(34) in tRNA + guanine. The protein operates within tRNA modification; tRNA-queuosine biosynthesis. Catalyzes the base-exchange of a guanine (G) residue with the queuine precursor 7-aminomethyl-7-deazaguanine (PreQ1) at position 34 (anticodon wobble position) in tRNAs with GU(N) anticodons (tRNA-Asp, -Asn, -His and -Tyr). Catalysis occurs through a double-displacement mechanism. The nucleophile active site attacks the C1' of nucleotide 34 to detach the guanine base from the RNA, forming a covalent enzyme-RNA intermediate. The proton acceptor active site deprotonates the incoming PreQ1, allowing a nucleophilic attack on the C1' of the ribose to form the product. After dissociation, two additional enzymatic reactions on the tRNA convert PreQ1 to queuine (Q), resulting in the hypermodified nucleoside queuosine (7-(((4,5-cis-dihydroxy-2-cyclopenten-1-yl)amino)methyl)-7-deazaguanosine). This is Queuine tRNA-ribosyltransferase from Prochlorococcus marinus (strain MIT 9312).